Reading from the N-terminus, the 3084-residue chain is Highly reducing polyketide synthase sdnO (3084 aa).

Residues 4–430 enclose the Ketosynthase family 3 (KS3) domain; it reads PIPLAVVGIA…GTNAHAVLEK (427 aa). Active-site for beta-ketoacyl synthase activity residues include cysteine 178, histidine 313, and histidine 353. The interval 541 to 841 is malonyl-CoA:ACP transacylase (MAT) domain; sequence FIFTGQGAQW…LAGPLRQSVA (301 aa). Serine 632 serves as the catalytic For malonyltransferase activity. The N-terminal hotdog fold stretch occupies residues 931-1071; it reads HDLLGLRMTD…GSVLIDLVSS (141 aa). Residues 931-1243 form a dehydratase (DH) domain region; the sequence is HDLLGLRMTD…RSAEADMLVF (313 aa). Positions 931 to 1275 constitute a PKS/mFAS DH domain; that stretch reads HDLLGLRMTD…LRSLAALDGA (345 aa). Residue histidine 963 is the Proton acceptor; for dehydratase activity of the active site. Positions 1099-1275 are C-terminal hotdog fold; the sequence is LQPGEDIPPS…LRSLAALDGA (177 aa). Catalysis depends on aspartate 1177, which acts as the Proton donor; for dehydratase activity. The tract at residues 1733–2045 is enoylreductase (ER) domain; it reads GTAHAATFVE…RHENMTKYVV (313 aa). The interval 2069-2252 is catalytic ketoreductase (KRc) domain; that stretch reads ATYVVAGGLG…YMALNIGLIE (184 aa). A Carrier domain is found at 2363–2440; that stretch reads DIEAFAARAI…ALARKVTLRS (78 aa). Serine 2400 is modified (O-(pantetheine 4'-phosphoryl)serine). The tract at residues 2445–2501 is disordered; sequence GGAGGDASSTGNSESMARTPSDSSTVPTSIPATPSRSPSREPPAKETLTKSQQHLPI. Positions 2456–2481 are enriched in polar residues; sequence NSESMARTPSDSSTVPTSIPATPSRS. The span at 2482-2492 shows a compositional bias: basic and acidic residues; it reads PSREPPAKETL. A choline/carnitine acyltransferase domain region spans residues 2864-3084; sequence HFYSQLNRAF…LGVVRRVVEG (221 aa).

Its pathway is antibiotic biosynthesis. Its function is as follows. Highly reducing polyketide synthase; part of the gene cluster that mediates the biosynthesis of sordarin and hypoxysordarin, glycoside antibiotics with a unique tetracyclic diterpene aglycone structure. First, the geranylgeranyl diphosphate synthase sdnC constructs GGDP from farnesyl diphosphate and isopentenyl diphosphate. The diterpene cyclase sdnA then catalyzes the cyclization of GGDP to afford cycloaraneosene. Cycloaraneosene is then hydroxylated four times by the putative cytochrome P450 monooxygenases sdnB, sdnE, sdnF and sdnH to give a hydroxylated cycloaraneosene derivative such as cycloaraneosene-8,9,13,19-tetraol. Although the order of the hydroxylations is unclear, at least C8, C9 and C13 of the cycloaraneosene skeleton are hydroxylated before the sordaricin formation. Dehydration of the 13-hydroxy group of the hydroxylated cycloaraneosene derivative might be catalyzed by an unassigned hypothetical protein such as sdnG and sdnP to construct the cyclopentadiene moiety. The FAD-dependent oxidoreductase sdnN is proposed to catalyze the oxidation at C9 of the hydroxylated cycloaraneosene derivative and also catalyze the Baeyer-Villiger oxidation to give the lactone intermediate. The presumed lactone intermediate would be hydrolyzed to give an acrolein moiety and a carboxylate moiety. Then, [4+2]cycloaddition would occur between the acrolein moiety and the cyclopentadiene moiety to give sordaricin. SdnN might also be involved in the [4+2]cycloaddition after the hypothesized oxidation to accommodate the oxidized product and prompt the [4+2]cycloaddition. GDP-6-deoxy-D-altrose may be biosynthesized from GDP-D-mannose by the putative GDP-mannose-4,6-dehydratase sdnI and the short-chain dehydrogenase sdnK. The glycosyltransferase sdnJ catalyzes the attachment of 6-deoxy-D-altrose onto the 19-hydroxy group of sordaricin to give 4'-O-demethylsordarin. The methyltransferase sdnD would complete the biosynthesis of sordarin. Sordarin can be further modified into hypoxysordarin. The unique acyl chain at the 3'-hydroxy group of hypoxysordarin would be constructed by an iterative type I PKS sdnO and the trans-acting polyketide methyltransferase sdnL. SdnL would be responsible for the introduction of an alpha-methyl group of the polyketide chain. Alternatively, the putative beta-lactamase-like sdnR might be responsible for the cleavage and transfer of the polyketide chain from the PKS sdnO to sordarin. Two putative cytochrome P450 monooxygenases, sdnQ and sdnT, might catalyze the epoxidations of the polyketide chain to complete the biosynthesis of hypoxysordarin. Transcriptional regulators sdnM and sdnS are presumably encoded for the transcriptional regulation of the expression of the sdn gene cluster. This Sordaria araneosa (Pleurage araneosa) protein is Highly reducing polyketide synthase sdnO.